The chain runs to 362 residues: MKLHCCLFTLVASIIVPAAFVLEDVDFDQMVSLEANRSSYNASFPSSFELSASSHSDDDVIIAKEGTSVSIECLLTASHYEDVHWHNSKGQQLDGRSRGGKWLVSDNFLNITNVAFDDRGLYTCFVTSPIRASYSVTLRVIFTSGDMSVYYMIVCLIAFTITLILNVTRLCMMSSHLRKTEKAINEFFRTEGAEKLQKAFEIAKRIPIITSAKTLELAKVTQFKTMEFARYIEELARSVPLPPLILNCRAFVEEMFEAVRVDDPDDLGERIKERPALNAQGGIYVINPEMGRSNSPGGDSDDGSLNEQGQEIAVQVSVHLQSETKSIDTESQGSSHFSPPDDIGSAESNCNYKDGAYENCQL.

A signal peptide spans Met1–Ala18. The Extracellular segment spans residues Ala19–Met147. N-linked (GlcNAc...) asparagine glycosylation is found at Asn36, Asn41, and Asn110. An Ig-like C2-type domain is found at Pro45–Thr137. Cys73 and Cys124 are joined by a disulfide. A helical transmembrane segment spans residues Ser148 to Leu170. The Cytoplasmic segment spans residues Cys171–Leu362. 2 disordered regions span residues Val285–Asn306 and Glu323–Cys350. Over residues Glu323–Phe337 the composition is skewed to polar residues.

Post-translationally, glycosylated.

Its subcellular location is the cell membrane. In terms of biological role, component of the elastin-associated microfibrils. The sequence is that of Microfibril-associated glycoprotein 3 (MFAP3) from Homo sapiens (Human).